A 2629-amino-acid chain; its full sequence is Protein DOP1 homolog (2629 aa).

Disordered stretches follow at residues 561–584 (NKGV…SRLN), 605–652 (SASN…TPRS), 688–710 (AGNV…PQFY), 1278–1340 (MDES…SSSA), 1371–1395 (TYRL…QTEH), 1435–1471 (ISKT…ATDS), and 1766–1785 (RQDT…SPTR). Composition is skewed to polar residues over residues 605–615 (SASNQSVGRQS) and 636–647 (ASDTGQQSSSDL). A compositionally biased stretch (acidic residues) spans 1307–1320 (DITDNSDSSDFESD). The span at 1321 to 1333 (SELRETSLEKEDS) shows a compositional bias: basic and acidic residues. Polar residues-rich tracts occupy residues 1381–1391 (GENSLNSVATD) and 1435–1450 (ISKT…SCSQ).

This sequence belongs to the DOP1 family.

The protein localises to the golgi apparatus membrane. May be involved in protein traffic between late Golgi and early endosomes. The polypeptide is Protein DOP1 homolog (Drosophila pseudoobscura pseudoobscura (Fruit fly)).